The chain runs to 89 residues: Small ribosomal subunit protein uS15 (89 aa).

It belongs to the universal ribosomal protein uS15 family. Part of the 30S ribosomal subunit. Forms a bridge to the 50S subunit in the 70S ribosome, contacting the 23S rRNA.

Functionally, one of the primary rRNA binding proteins, it binds directly to 16S rRNA where it helps nucleate assembly of the platform of the 30S subunit by binding and bridging several RNA helices of the 16S rRNA. In terms of biological role, forms an intersubunit bridge (bridge B4) with the 23S rRNA of the 50S subunit in the ribosome. The polypeptide is Small ribosomal subunit protein uS15 (Streptococcus pneumoniae (strain P1031)).